Consider the following 395-residue polypeptide: Synaptotagmin-8 (395 aa).

Over 1-44 (MQADRSMKMGHVSNPLSTSAPVDATAGPNLIPDLITKIPWPRWI) the chain is Extracellular. The helical; Signal-anchor for type III membrane protein transmembrane segment at 45-65 (LFIAILAAGVLLVSCLLCVIC) threads the bilayer. At 66-395 (YCCHRQRHRK…PRLPLLRPRS (330 aa)) the chain is on the cytoplasmic side. 2 consecutive C2 domains span residues 113–229 (PWGQ…ESWY) and 241–370 (QMGE…AQWH).

This sequence belongs to the synaptotagmin family. Homodimer or homooligomer. Homodimerization and homooligomerization do not depend on Ca(2+). Interacts with SYNCRIP isoform 2 C-terminus. Binds inositol 1,3,4,5-tetrakisphosphate (IP4). Binds to AP2 in a Ca(2+)-independent manner. Interacts with STX1A, STX1B and STX2; the interaction is Ca(2+)-dependent. As to expression, ubiquitous. Strongly expressed in heart, kidney, cerebral cortex, pancreas, and many insulin-secreting cells; lower expression in spleen. Broadly distributed in kidney.

It localises to the cell membrane. Its subcellular location is the cytoplasmic vesicle. It is found in the secretory vesicle. The protein localises to the acrosome. In terms of biological role, involved in the trafficking and exocytosis of secretory vesicles in non-neuronal tissues. Mediates Ca(2+)-regulation of exocytosis acrosomal reaction in sperm. May mediate Ca(2+)-regulation of exocytosis in insulin secreted cells. This Rattus norvegicus (Rat) protein is Synaptotagmin-8 (Syt8).